The chain runs to 440 residues: Suppressor of cytokine signaling 4 (440 aa).

Residues 1-10 (MAENNENISK) are compositionally biased toward polar residues. The disordered stretch occupies residues 1–29 (MAENNENISKNVDVRPKTSRSRSADRKDG). The span at 12-29 (VDVRPKTSRSRSADRKDG) shows a compositional bias: basic and acidic residues. The SH2 domain maps to 286–381 (CYWGVMDKYA…FFEPLLSTPL (96 aa)). Residues 376-425 (LLSTPLIRTFPFSLQHICRTVICNCTTYDGIDALPIPSSMKLYLKEYHYK) enclose the SOCS box domain.

Its pathway is protein modification; protein ubiquitination. In terms of biological role, SOCS family proteins form part of a classical negative feedback system that regulates cytokine signal transduction. Substrate-recognition component of a SCF-like ECS (Elongin BC-CUL2/5-SOCS-box protein) E3 ubiquitin-protein ligase complex which mediates the ubiquitination and subsequent proteasomal degradation of target proteins. Inhibits EGF signaling by mediating the degradation of the Tyr-phosphorylated EGF receptor/EGFR. In Homo sapiens (Human), this protein is Suppressor of cytokine signaling 4 (SOCS4).